A 327-amino-acid chain; its full sequence is tRNA uridine(34) hydroxylase (327 aa).

Residues 142 to 240 (DDPDTLVIDT…YLEQVPEAES (99 aa)) form the Rhodanese domain. The Cysteine persulfide intermediate role is filled by C200.

It belongs to the TrhO family.

It catalyses the reaction uridine(34) in tRNA + AH2 + O2 = 5-hydroxyuridine(34) in tRNA + A + H2O. Functionally, catalyzes oxygen-dependent 5-hydroxyuridine (ho5U) modification at position 34 in tRNAs. The sequence is that of tRNA uridine(34) hydroxylase from Synechococcus sp. (strain CC9605).